The following is a 360-amino-acid chain: Type 2 DNA topoisomerase 6 subunit A (360 aa).

In terms of domain architecture, Topo IIA-type catalytic spans 3-140 (EIERRCLRAL…FHIRPEEDGA (138 aa)). The active-site O-(5'-phospho-DNA)-tyrosine intermediate is the Y97. 2 residues coordinate Mg(2+): E193 and D245.

This sequence belongs to the TOP6A family. Homodimer. Heterotetramer of two Top6A and two Top6B chains. It depends on Mg(2+) as a cofactor.

The enzyme catalyses ATP-dependent breakage, passage and rejoining of double-stranded DNA.. Functionally, relaxes both positive and negative superturns and exhibits a strong decatenase activity. This Archaeoglobus fulgidus (strain ATCC 49558 / DSM 4304 / JCM 9628 / NBRC 100126 / VC-16) protein is Type 2 DNA topoisomerase 6 subunit A.